The sequence spans 705 residues: Polyribonucleotide nucleotidyltransferase (705 aa).

Aspartate 487 and aspartate 493 together coordinate Mg(2+). The 60-residue stretch at 554–613 folds into the KH domain; it reads PKILTMAIEPDKIRDVIGPSGKQINQIIDETGVKIDIEQDGSIFISSTDNEMNKKAKQII. Positions 623–691 constitute an S1 motif domain; it reads GQIYLGKVKR…RQGRVNLSRK (69 aa).

It belongs to the polyribonucleotide nucleotidyltransferase family. The cofactor is Mg(2+).

The protein localises to the cytoplasm. The enzyme catalyses RNA(n+1) + phosphate = RNA(n) + a ribonucleoside 5'-diphosphate. Involved in mRNA degradation. Catalyzes the phosphorolysis of single-stranded polyribonucleotides processively in the 3'- to 5'-direction. This is Polyribonucleotide nucleotidyltransferase from Oceanobacillus iheyensis (strain DSM 14371 / CIP 107618 / JCM 11309 / KCTC 3954 / HTE831).